We begin with the raw amino-acid sequence, 30 residues long: L-serine dehydratase, alpha chain (30 aa).

Belongs to the iron-sulfur dependent L-serine dehydratase family. In terms of assembly, heterodimer of an alpha chain and a beta chain. [4Fe-4S] cluster serves as cofactor.

The catalysed reaction is L-serine = pyruvate + NH4(+). The protein operates within carbohydrate biosynthesis; gluconeogenesis. The protein is L-serine dehydratase, alpha chain of Anaerotignum propionicum (Clostridium propionicum).